A 502-amino-acid polypeptide reads, in one-letter code: Alpha-ketoglutarate-dependent dioxygenase FTO (502 aa).

A fe2OG dioxygenase domain region spans residues 32–324 (TPKDDEFYQQ…SSTHRVAECS (293 aa)). 2 residues coordinate substrate: Arg-96 and Tyr-108. Asn-202 contacts 2-oxoglutarate. The tract at residues 210 to 221 (PYLKEEPYFGMG) is loop L1; predicted to block binding of double-stranded DNA or RNA. Lys-213 is subject to N6-acetyllysine. Positions 228 and 230 each coordinate Fe cation. 228-231 (HHDE) contributes to the substrate binding site. Tyr-292 serves as a coordination point for 2-oxoglutarate. His-304 serves as a coordination point for Fe cation. Residues 313–315 (RFS), Thr-317, and Arg-319 each bind 2-oxoglutarate.

This sequence belongs to the fto family. In terms of assembly, monomer. May also exist as homodimer. The cofactor is Fe(2+). Ubiquitous. Detected in brain, brain cortex, hypothalamus, cerebellum, liver, pancreas, heart, kidney, white adipose tissue and skeletal muscle. Most abundant in the brain, particularly in hypothalamic nuclei governing energy balance.

It localises to the nucleus. Its subcellular location is the nucleus speckle. The protein localises to the cytoplasm. The catalysed reaction is a 5'-end (N(7)-methyl 5'-triphosphoguanosine)-(N(6),2'-O-dimethyladenosine) in mRNA + 2-oxoglutarate + O2 = a 5'-end (N(7)-methyl 5'-triphosphoguanosine)-(2'-O-methyladenosine) in mRNA + formaldehyde + succinate + CO2. It carries out the reaction an N(6)-methyladenosine in mRNA + 2-oxoglutarate + O2 = an adenosine in mRNA + formaldehyde + succinate + CO2. The enzyme catalyses N(6)-methyladenosine in U6 snRNA + 2-oxoglutarate + O2 = adenosine in U6 snRNA + formaldehyde + succinate + CO2. It catalyses the reaction a 5'-end (N(7)-methyl 5'-triphosphoguanosine)-(N(6),2'-O-dimethyladenosine) in U6 snRNA + 2-oxoglutarate + O2 = a 5'-end (N(7)-methyl 5'-triphosphoguanosine)-(2'-O-methyladenosine) in U6 snRNA + formaldehyde + succinate + CO2. The catalysed reaction is an N(1)-methyladenosine in tRNA + 2-oxoglutarate + O2 = an adenosine in tRNA + formaldehyde + succinate + CO2. Activated by ascorbate. Inhibited by N-oxalylglycine, fumarate and succinate. Functionally, RNA demethylase that mediates oxidative demethylation of different RNA species, such as mRNAs, tRNAs and snRNAs, and acts as a regulator of fat mass, adipogenesis and energy homeostasis. Specifically demethylates N(6)-methyladenosine (m6A) RNA, the most prevalent internal modification of messenger RNA (mRNA) in higher eukaryotes. M6A demethylation by FTO affects mRNA expression and stability. Also able to demethylate m6A in U6 small nuclear RNA (snRNA). Mediates demethylation of N(6),2'-O-dimethyladenosine cap (m6A(m)), by demethylating the N(6)-methyladenosine at the second transcribed position of mRNAs and U6 snRNA. Demethylation of m6A(m) in the 5'-cap by FTO affects mRNA stability by promoting susceptibility to decapping. Also acts as a tRNA demethylase by removing N(1)-methyladenine from various tRNAs. Has no activity towards 1-methylguanine. Has no detectable activity towards double-stranded DNA. Also able to repair alkylated DNA and RNA by oxidative demethylation: demethylates single-stranded RNA containing 3-methyluracil, single-stranded DNA containing 3-methylthymine and has low demethylase activity towards single-stranded DNA containing 1-methyladenine or 3-methylcytosine. Ability to repair alkylated DNA and RNA is however unsure in vivo. Involved in the regulation of fat mass, adipogenesis and body weight, thereby contributing to the regulation of body size and body fat accumulation. Involved in the regulation of thermogenesis and the control of adipocyte differentiation into brown or white fat cells. Regulates activity of the dopaminergic midbrain circuitry via its ability to demethylate m6A in mRNAs. This is Alpha-ketoglutarate-dependent dioxygenase FTO from Mus musculus (Mouse).